A 317-amino-acid chain; its full sequence is Aquaporin-2 (317 aa).

At 1-75 the chain is on the cytoplasmic side; the sequence is MSLRDDLTIN…RSQEFKMQHR (75 aa). A helical membrane pass occupies residues 76-96; that stretch reads EFLAEFIGTLILVLLTCGFCA. Over 97 to 108 the chain is Extracellular; that stretch reads EQTLNIEKSKSW. A helical membrane pass occupies residues 109–129; the sequence is LTSSLGSGLSVLIGICVAGHV. Residues 130-154 lie on the Cytoplasmic side of the membrane; it reads SGGHLNPAITIAFWVFSGFPIRKVP. The NPA 1 motif lies at 135–137; it reads NPA. The helical transmembrane segment at 155 to 175 threads the bilayer; sequence MYITAQLLGAFSGAALLYSIV. At 176–208 the chain is on the extracellular side; it reads EPAISQFDHGKRQILGELGTAGIFGTYPPLYVG. A helical membrane pass occupies residues 209-229; it reads TGSAVASEVVGTAMLLLVVMV. Residues 230 to 242 are Cytoplasmic-facing; the sequence is TGHPNNLPFRTAQ. Residues 243–263 traverse the membrane as a helical segment; the sequence is GAMIALGVTTISLCIGYTSGF. At 264 to 295 the chain is on the extracellular side; sequence SLNPARDFGPRLFTAVAGWGIDVFTVHHYYAL. The short motif at 266 to 268 is the NPA 2 element; the sequence is NPA. The helical transmembrane segment at 296-316 threads the bilayer; sequence VPMFAPILGGLAGGFIYTVFI. D317 is a topological domain (cytoplasmic).

Belongs to the MIP/aquaporin (TC 1.A.8) family.

It localises to the cell membrane. The catalysed reaction is H2O(in) = H2O(out). It catalyses the reaction glycerol(in) = glycerol(out). In terms of biological role, water channel required to facilitate the transport of water across membranes. Contributes to water uptake of spores during the early stages of spore germination. Aquaporins AQP1 and AQP2 act as extracellular pH sensors and enable the spores to hydrate under favorable conditions and to commence germination. Wounded vegetables and fruit present acidic pH, so the optimal pH range for germination is adapted to the relevant host pH. The chain is Aquaporin-2 from Rhizopus delemar (strain RA 99-880 / ATCC MYA-4621 / FGSC 9543 / NRRL 43880) (Mucormycosis agent).